We begin with the raw amino-acid sequence, 956 residues long: Netrin receptor UNC5D (956 aa).

Residues 1–30 (MGTGAADRSRGARWWLPWLGLCFWAAGAEA) form the signal peptide. At 31–382 (ARGADSGEVL…SRRGIENASD (352 aa)) the chain is on the extracellular side. The 98-residue stretch at 52–149 (PHFIEEPEDA…LGTSKSRKAS (98 aa)) folds into the Ig-like domain. Disulfide bonds link Cys-73-Cys-134, Cys-85-Cys-132, Cys-178-Cys-229, Cys-262-Cys-299, Cys-266-Cys-303, Cys-277-Cys-289, Cys-318-Cys-352, Cys-322-Cys-357, and Cys-330-Cys-342. The segment at 89 to 91 (WVH) is important for interaction with FLRT2. 2 N-linked (GlcNAc...) asparagine glycosylation sites follow: Asn-115 and Asn-226. The Ig-like C2-type domain maps to 164–242 (QGREVPIEGM…NIVAKRRSLS (79 aa)). TSP type-1 domains are found at residues 250 to 304 (NGGW…ALCP) and 306 to 358 (DGSW…GLCI). A helical membrane pass occupies residues 383–403 (IALYSGLGAAVVAVAVLVIGV). At 404 to 956 (TLYRRSHSDY…DFNYSRQNGL (553 aa)) the chain is on the cytoplasmic side. Positions 545-685 (LRTTGVFGHL…FGTYALTGEP (141 aa)) constitute a ZU5 domain. The Death domain occupies 862–939 (QRICATFDTP…RTHTKLSNIT (78 aa)).

Belongs to the unc-5 family. Interacts (via extracellular domain) with FLRT2 and FLRT3 (via extracellular domain); the interaction is direct. Has higher affinity for FLRT2. Identified in a complex with FLRT3 and ADGRL3; does not interact with ADGRL3 by itself. In terms of processing, proteolytically cleaved by caspases during apoptosis. The cleavage does not take place when the receptor is associated with netrin ligand. Its cleavage by caspases is required to induce apoptosis.

Its subcellular location is the cell membrane. Functionally, receptor for the netrin NTN4 that promotes neuronal cell survival. Plays a role in cell-cell adhesion and cell guidance. Receptor for netrin involved in cell migration. Plays a role in axon guidance by mediating axon repulsion of neuronal growth cones in the developing nervous system upon ligand binding. May play a role in apoptosis in response to DNA damage. It also acts as a dependence receptor required for apoptosis induction when not associated with netrin ligand. Mediates cell-cell adhesion via its interaction with FLRT3 on an adjacent cell. The sequence is that of Netrin receptor UNC5D from Rattus norvegicus (Rat).